Reading from the N-terminus, the 255-residue chain is Ribonuclease HII (255 aa).

The RNase H type-2 domain occupies 72 to 255 (AIICGIDEVG…KSFEPIKSLL (184 aa)). 3 residues coordinate a divalent metal cation: D78, E79, and D170.

Belongs to the RNase HII family. The cofactor is Mn(2+). Mg(2+) serves as cofactor.

The protein resides in the cytoplasm. The enzyme catalyses Endonucleolytic cleavage to 5'-phosphomonoester.. Endonuclease that specifically degrades the RNA of RNA-DNA hybrids. This Staphylococcus aureus (strain MRSA252) protein is Ribonuclease HII.